We begin with the raw amino-acid sequence, 403 residues long: GTPase Obg (403 aa).

An Obg domain is found at 1 to 159 (MKFIDESLIR…RDLLLELMLL (159 aa)). Residues 160 to 333 (ADVGMLGFPN…LCRDIMDFII (174 aa)) form the OBG-type G domain. GTP contacts are provided by residues 166–173 (GFPNAGKS), 191–195 (FTTLV), 213–216 (DIPG), 283–286 (NKID), and 314–316 (SAA). Mg(2+) contacts are provided by Ser173 and Thr193. Residues 364–403 (YQFDDDEDWDDDWTEEDDDEDWDDDWSEEDDEGIEFIYKP) form a disordered region. The span at 365 to 397 (QFDDDEDWDDDWTEEDDDEDWDDDWSEEDDEGI) shows a compositional bias: acidic residues.

The protein belongs to the TRAFAC class OBG-HflX-like GTPase superfamily. OBG GTPase family. As to quaternary structure, monomer. Mg(2+) serves as cofactor.

Its subcellular location is the cytoplasm. Functionally, an essential GTPase which binds GTP, GDP and possibly (p)ppGpp with moderate affinity, with high nucleotide exchange rates and a fairly low GTP hydrolysis rate. Plays a role in control of the cell cycle, stress response, ribosome biogenesis and in those bacteria that undergo differentiation, in morphogenesis control. This Haemophilus influenzae (strain PittGG) protein is GTPase Obg.